A 53-amino-acid chain; its full sequence is Conotoxin Cal6.31 (53 aa).

The first 24 residues, 1 to 24 (MKLTCVLIAAVLLLAVCQLDSADA), serve as a signal peptide directing secretion. 3 disulfide bridges follow: cysteine 29–cysteine 43, cysteine 36–cysteine 47, and cysteine 42–cysteine 51.

This sequence belongs to the conotoxin O1 superfamily. As to expression, expressed by the venom duct.

It localises to the secreted. Probable neurotoxin. The chain is Conotoxin Cal6.31 from Californiconus californicus (California cone).